Consider the following 390-residue polypeptide: Mevalonate kinase (390 aa).

Residues lysine 16, serine 130, and 135-141 each bind ATP; that span reads GAGLGSS. Positions 141 and 193 each coordinate Mg(2+). The active-site Proton acceptor is aspartate 204.

The protein belongs to the GHMP kinase family. Mevalonate kinase subfamily. It depends on Mg(2+) as a cofactor.

The protein resides in the cytoplasm. The catalysed reaction is (R)-mevalonate + ATP = (R)-5-phosphomevalonate + ADP + H(+). It participates in isoprenoid biosynthesis; isopentenyl diphosphate biosynthesis via mevalonate pathway; isopentenyl diphosphate from (R)-mevalonate: step 1/3. In terms of biological role, catalyzes the phosphorylation of mevalonate to mevalonate 5-phosphate, a key step in isoprenoid biosynthesis. The polypeptide is Mevalonate kinase (Dictyostelium discoideum (Social amoeba)).